The following is a 183-amino-acid chain: Transcription termination/antitermination protein NusG (183 aa).

The 31-residue stretch at 131-161 (PGEEVRVTEGPFADFNGTVEEVDYEKGRLKV) folds into the KOW domain.

It belongs to the NusG family.

In terms of biological role, participates in transcription elongation, termination and antitermination. The protein is Transcription termination/antitermination protein NusG of Pasteurella multocida (strain Pm70).